The primary structure comprises 379 residues: Queuine tRNA-ribosyltransferase (379 aa).

The active-site Proton acceptor is D94. Substrate contacts are provided by residues 94–98 (DSGGF), D148, Q191, and G218. The segment at 249-255 (GVGSPDS) is RNA binding. D268 acts as the Nucleophile in catalysis. Residues 273–277 (TRIAR) form an RNA binding; important for wobble base 34 recognition region. Zn(2+) contacts are provided by C306, C308, C311, and H337.

It belongs to the queuine tRNA-ribosyltransferase family. In terms of assembly, homodimer. Within each dimer, one monomer is responsible for RNA recognition and catalysis, while the other monomer binds to the replacement base PreQ1. Zn(2+) is required as a cofactor.

It catalyses the reaction 7-aminomethyl-7-carbaguanine + guanosine(34) in tRNA = 7-aminomethyl-7-carbaguanosine(34) in tRNA + guanine. Its pathway is tRNA modification; tRNA-queuosine biosynthesis. Catalyzes the base-exchange of a guanine (G) residue with the queuine precursor 7-aminomethyl-7-deazaguanine (PreQ1) at position 34 (anticodon wobble position) in tRNAs with GU(N) anticodons (tRNA-Asp, -Asn, -His and -Tyr). Catalysis occurs through a double-displacement mechanism. The nucleophile active site attacks the C1' of nucleotide 34 to detach the guanine base from the RNA, forming a covalent enzyme-RNA intermediate. The proton acceptor active site deprotonates the incoming PreQ1, allowing a nucleophilic attack on the C1' of the ribose to form the product. After dissociation, two additional enzymatic reactions on the tRNA convert PreQ1 to queuine (Q), resulting in the hypermodified nucleoside queuosine (7-(((4,5-cis-dihydroxy-2-cyclopenten-1-yl)amino)methyl)-7-deazaguanosine). The polypeptide is Queuine tRNA-ribosyltransferase (Bacillus cereus (strain Q1)).